The primary structure comprises 3011 residues: Genome polyprotein (3011 aa).

Serine 2 carries the N-acetylserine; by host modification. The interaction with STAT1 stretch occupies residues 2-23 (STNPKPQRKTKRNTNRRPQDVK). Positions 2 to 58 (STNPKPQRKTKRNTNRRPQDVKFPGGGQIVGGVYLLPRRGPRVGVRATRKTSERSQP) are interaction with EIF2AK2/PKR. Residues 2 to 59 (STNPKPQRKTKRNTNRRPQDVKFPGGGQIVGGVYLLPRRGPRVGVRATRKTSERSQPR) form an interaction with DDX3X region. A disordered region spans residues 2–75 (STNPKPQRKT…PKARRPEGRS (74 aa)). The Cytoplasmic segment spans residues 2–168 (STNPKPQRKT…EDGVNYATGN (167 aa)). 2 short sequence motifs (nuclear localization signal) span residues 5–13 (PKPQRKTKR) and 38–43 (PRRGPR). Over residues 7 to 16 (PQRKTKRNTN) the composition is skewed to basic residues. A Phosphoserine; by host modification is found at serine 53. 2 short sequence motifs (nuclear localization signal) span residues 58 to 64 (PRGRRQP) and 66 to 71 (PKARRP). The segment covering 58–68 (PRGRRQPIPKA) has biased composition (basic residues). Serine 99 bears the Phosphoserine; by host mark. Residues 112-152 (PRRRSRNLGKVIDTLTCGFADLMGYIPLVGAPLGGAARALA) are important for endoplasmic reticulum and mitochondrial localization. Serine 116 is subject to Phosphoserine; by host PKA. Residues 122-173 (VIDTLTCGFADLMGYIPLVGAPLGGAARALAHGVRVLEDGVNYATGNLPGCS) form an interaction with APOA2 region. The important for lipid droplets localization stretch occupies residues 164–167 (YATG). The helical transmembrane segment at 169 to 189 (LPGCSFSIFLLALLSCLTVPA) threads the bilayer. The propeptide at 178 to 191 (LLALLSCLTVPASA) is ER anchor for the core protein, removed in mature form by host signal peptidase. The Lumenal segment spans residues 190 to 358 (SAVGVRNSSG…AGAHWGVLAG (169 aa)). Residues asparagine 196, asparagine 209, and asparagine 234 are each glycosylated (N-linked (GlcNAc...) asparagine; by host). Residues 265-296 (IVGAAAFCSAMYVGDLCGSIFLVGQIFTFSPR) form an important for fusion region. A glycan (N-linked (GlcNAc...) asparagine; by host) is linked at asparagine 305. The chain crosses the membrane as a helical span at residues 359-379 (LAYYSMVGNWAKVVVVLLLFA). Residues 380-725 (GVDAETRVTG…WEYVVLLFLL (346 aa)) lie on the Lumenal side of the membrane. The interval 385–411 (TRVTGGAAGHTAFGFASFLAPGAKQKI) is HVR1. 4 N-linked (GlcNAc...) (high mannose) asparagine; by host glycosylation sites follow: asparagine 417, asparagine 423, asparagine 430, and asparagine 448. 4 disulfides stabilise this stretch: cysteine 429/cysteine 552, cysteine 452/cysteine 459, cysteine 486/cysteine 494, and cysteine 503/cysteine 508. The interval 474-479 (HEGNAS) is HVR2. A CD81-binding 1 region spans residues 480–493 (DDQRPYCWHYALRP). Residue asparagine 532 is glycosylated (N-linked (GlcNAc...) (high mannose) asparagine; by host). N-linked (GlcNAc...) asparagine; by host glycosylation is present at asparagine 540. A CD81-binding 2 region spans residues 544–551 (PPMGNWFG). Asparagine 556 carries N-linked (GlcNAc...) (high mannose) asparagine; by host glycosylation. Cysteine 564 and cysteine 569 are disulfide-bonded. An N-linked (GlcNAc...) (high mannose) asparagine; by host glycan is attached at asparagine 576. Disulfide bonds link cysteine 581/cysteine 585, cysteine 597/cysteine 620, and cysteine 607/cysteine 644. N-linked (GlcNAc...) (high mannose) asparagine; by host glycans are attached at residues asparagine 623 and asparagine 645. Cysteine 652 and cysteine 677 form a disulfide bridge. The interval 660–671 (AELSPLLLSTTQ) is PKR/eIF2-alpha phosphorylation homology domain (PePHD). Residues 726-746 (LADARICACLWMMLLISQVEA) form a helical membrane-spanning segment. The Lumenal portion of the chain corresponds to 747–757 (ALENLIVLNAA). The helical transmembrane segment at 758-778 (SLVGTHGIVPFFIFFCAAWYL) threads the bilayer. The Cytoplasmic portion of the chain corresponds to 779 to 781 (KGK). Residues 782-803 (WAPGLAYSVYGMWPLLLLLLAL) form a helical membrane-spanning segment. At 804–813 (PQRAYALDQE) the chain is on the lumenal side. A helical transmembrane segment spans residues 814-834 (LAASCGATVFICLAVLTLSPY). Residues 835–838 (YKQY) lie on the Cytoplasmic side of the membrane. Residues 839-859 (MARGIWWLQYMLTRAEALLQV) form a helical membrane-spanning segment. Over 860–881 (WVPPLNARGGRDGVVLLTCVLH) the chain is Lumenal. Residues 882–902 (PHLLFEITKIMLAILGPLWIL) form a helical membrane-spanning segment. The region spanning 903–1026 (QASLLKVPYF…ALTDKGWRLL (124 aa)) is the Peptidase C18 domain. The Cytoplasmic segment spans residues 903–1657 (QASLLKVPYF…CMSADLEVVT (755 aa)). Residues 904 to 1206 (ASLLKVPYFV…PVESLETTMR (303 aa)) are protease NS2-3. Cysteine 922 carries the S-palmitoyl cysteine; by host lipid modification. An interaction with host SCPS1 region spans residues 929–949 (AGGQYVQMALLKLGAFAGTYI). Catalysis depends on for protease NS2 activity; shared with dimeric partner residues histidine 952, glutamate 972, and cysteine 993. The region spanning 1027–1208 (APITAYAQQT…ESLETTMRSP (182 aa)) is the Peptidase S29 domain. Catalysis depends on charge relay system; for serine protease NS3 activity residues histidine 1083 and aspartate 1107. Residues cysteine 1123 and cysteine 1125 each contribute to the Zn(2+) site. Catalysis depends on serine 1165, which acts as the Charge relay system; for serine protease NS3 activity. Zn(2+) contacts are provided by cysteine 1171 and histidine 1175. The Helicase ATP-binding domain maps to 1217-1369 (PTVPQSYQVA…SNIEEVALST (153 aa)). 1230-1237 (APTGSGKS) provides a ligand contact to ATP. The Mg(2+) site is built by serine 1237 and glutamate 1317. Positions 1316–1319 (DECH) match the DECH box motif. Residues 1486-1497 (QRRGRTGRGKHG) are RNA-binding. The helical transmembrane segment at 1658 to 1678 (STWVLVGGVLAALAAYCLSTG) threads the bilayer. Positions 1679-1690 (SVVIVGRIILSG) are NS3-binding. The Cytoplasmic portion of the chain corresponds to 1679–1805 (SVVIVGRIIL…AVTSPLTTQQ (127 aa)). Residues 1806–1824 (TLLFNILGGWVAAQLAAPA) traverse the membrane as a helical segment. Topologically, residues 1825-1828 (AATA) are lumenal. A helical transmembrane segment spans residues 1829–1849 (FVGAGITGAVIGSVGLGKVLV). A topological domain (cytoplasmic) is located at residue aspartate 1850. The helical transmembrane segment at 1851–1871 (ILAGYGAGVAGALVAFKIMSG) threads the bilayer. The Lumenal segment spans residues 1872 to 1881 (EAPTAEDLVN). A helical membrane pass occupies residues 1882–1902 (LLPAILSPGALVVGVVCAAIL). Residues 1903-1972 (RRHVGPGEGA…WISSDCTAPC (70 aa)) are Cytoplasmic-facing. S-palmitoyl cysteine; by host attachment occurs at residues cysteine 1968 and cysteine 1972. The stretch at 1973 to 2002 (AGSWLKDVWDWICEVLSDFKSWLKAKLMPQ) is an intramembrane region. Residues 2003–2990 (LPGIPFVSCQ…YHSVSHVRPR (988 aa)) are Cytoplasmic-facing. Zn(2+)-binding residues include cysteine 2011, cysteine 2029, cysteine 2031, and cysteine 2052. Residues 2120-2208 (EFFTEVDGVR…ASSSASQLSA (89 aa)) form an FKBP8-binding region. The interval 2120–2332 (EFFTEVDGVR…PVPPPRRKRT (213 aa)) is transcriptional activation. The tract at residues 2135–2139 (PPCKP) is interaction with non-structural protein 4A. Residues 2189 to 2441 (RLNRGSPPSL…TPCAAEETKL (253 aa)) form an interaction with host SKP2 region. The residue at position 2194 (serine 2194) is a Phosphoserine; by host; in p56. Serine 2197, serine 2201, serine 2204, serine 2207, and serine 2210 each carry phosphoserine; by host; in p58. The ISDR stretch occupies residues 2210 to 2249 (SLKATCTTHHDSPDADLITANLLWRQEMGGNITRVESENK). Residues 2210–2275 (SLKATCTTHH…REISVPAEIL (66 aa)) are interaction with EIF2AK2/PKR. Positions 2249–2306 (KIVILDSFDPLVAEEDDREISVPAEILLKSKKFPPAMPIWARPDYNPPLVEPWKRPDY) are NS4B-binding. Residues 2322-2325 (TPVP) carry the SH3-binding motif. A Nuclear localization signal motif is present at residues 2326–2334 (PPRRKRTVV). A Glycyl lysine isopeptide (Lys-Gly) (interchain with G-Cter in ubiquitin) cross-link involves residue lysine 2350. The segment covering 2352-2373 (FGSSTTSGVTSGEAAESSPAPS) has biased composition (low complexity). Residues 2352 to 2409 (FGSSTTSGVTSGEAAESSPAPSCDGELDSEAESYSSMPPLEGEPGDPDLSDGSWSTVS) are disordered. Residues 2354–2377 (SSTTSGVTSGEAAESSPAPSCDGE) are V3. Phosphoserine; by host is present on residues serine 2449 and serine 2462. Residues 2634–2752 (PMGFSYDTRC…ICESAGVQED (119 aa)) enclose the RdRp catalytic domain. Positions 2640, 2738, and 2739 each coordinate Mg(2+). The helical transmembrane segment at 2991–3011 (WFFWCLLLLSVGVGIYLLPNR) threads the bilayer.

This sequence belongs to the hepacivirus polyprotein family. Homooligomer. Interacts with E1 (via C-terminus). Interacts with the non-structural protein 5A. Interacts (via N-terminus) with host STAT1 (via SH2 domain); this interaction results in decreased STAT1 phosphorylation and ubiquitin-mediated proteasome-dependent STAT1 degradation, leading to decreased IFN-stimulated gene transcription. Interacts with host STAT3; this interaction constitutively activates STAT3. Interacts with host LTBR receptor. Interacts with host TNFRSF1A receptor and possibly induces apoptosis. Interacts with host HNRPK. Interacts with host YWHAE. Interacts with host UBE3A/E6AP. Interacts with host DDX3X. Interacts with host APOA2. Interacts with host RXRA protein. Interacts with host SP110 isoform 3/Sp110b; this interaction sequesters the transcriptional corepressor SP110 away from the nucleus. Interacts with host CREB3 nuclear transcription protein; this interaction triggers cell transformation. Interacts with host ACY3. Interacts with host C1QR1. Interacts with host RBM24; this interaction, which enhances the interaction of the mature core protein with 5'-UTR, may inhibit viral translation and favor replication. Interacts with host EIF2AK2/PKR; this interaction induces the autophosphorylation of EIF2AK2. Part of the viral assembly initiation complex composed of NS2, E1, E2, NS3, NS4A, NS5A and the mature core protein. In terms of assembly, forms a heterodimer with envelope glycoprotein E2. Interacts with mature core protein. Interacts with protease NS2. The heterodimer E1/E2 interacts with host CLDN1; this interaction plays a role in viral entry into host cell. Interacts with host SPSB2 (via C-terminus). Part of the viral assembly initiation complex composed of NS2, E1, E2, NS3, NS4A, NS5A and the mature core protein. Interacts with host NEURL3; this interaction prevents E1 binding to glycoprotein E2. As to quaternary structure, forms a heterodimer with envelope glycoprotein E1. Interacts with host CD81 and SCARB1 receptors; these interactions play a role in viral entry into host cell. Interacts with host EIF2AK2/PKR; this interaction inhibits EIF2AK2 and probably allows the virus to evade the innate immune response. Interacts with host CD209/DC-SIGN and CLEC4M/DC-SIGNR. Interact with host SPCS1; this interaction is essential for viral particle assembly. Interacts with protease NS2. The heterodimer E1/E2 interacts with host CLDN1; this interaction plays a role in viral entry into host cell. Part of the viral assembly initiation complex composed of NS2, E1, E2, NS3, NS4A, NS5A and the mature core protein. Interacts with host SLC3A2/4F2hc; the interaction may facilitate viral entry into host cell. Interacts with human PLSCR1. Homohexamer. Homoheptamer. Interacts with protease NS2. In terms of assembly, homodimer. Interacts with host SPCS1; this interaction is essential for viral particle assembly. Interacts with envelope glycoprotein E1. Interacts with envelope glycoprotein E2. Interacts with viroporin p7. Interacts with serine protease/helicase NS3. Part of the replication complex composed of NS2, NS3, NS4A, NS4B, NS5A and the RNA-directed RNA polymerase embedded in an ER-derived membranous web. Part of the viral assembly initiation complex composed of NS2, E1, E2, NS3, NS4A, NS5A and the mature core protein. As to quaternary structure, interacts with protease NS2. Interacts with non-structural protein 4A; this interaction stabilizes the folding of NS3 serine protease. NS3-NS4A interaction is essential for NS3 activation and allows membrane anchorage of the latter. NS3/NS4A complex also prevents phosphorylation of host IRF3, thus preventing the establishment of dsRNA induced antiviral state. Interacts with host MAVS; this interaction leads to the cleavage and inhibition of host MAVS. Interacts with host TICAM1; this interaction leads to the cleavage and inhibition of host TICAM1. Interacts with host TANK-binding kinase/TBK1; this interaction results in the inhibition of the association between TBK1 and IRF3, which leads to the inhibition of IRF3 activation. Interacts with host RBM24. Part of the replication complex composed of NS2, NS3, NS4A, NS4B, NS5A and the RNA-directed RNA polymerase embedded in an ER-derived membranous web. Part of the viral assembly initiation complex composed of NS2, E1, E2, NS3, NS4A, NS5A and the mature core protein. Interacts with NS3 serine protease; this interaction stabilizes the folding of NS3 serine protease. NS3-NS4A interaction is essential for NS3 activation and allows membrane anchorage of the latter. Interacts with non-structural protein 5A (via N-terminus). Part of the replication complex composed of NS2, NS3, NS4A, NS4B, NS5A and the RNA-directed RNA polymerase embedded in an ER-derived membranous web. Part of the viral assembly initiation complex composed of NS2, E1, E2, NS3, NS4A, NS5A and the mature core protein. In terms of assembly, homomultimer. Interacts with non-structural protein NS5A. Interacts with host PLA2G4C; this interaction likely initiates the recruitment of replication complexes to lipid droplets. Interacts with host STING; this interaction disrupts the interaction between STING and TBK1 thereby suppressing the interferon signaling. Part of the replication complex composed of NS2, NS3, NS4A, NS4B, NS5A and the RNA-directed RNA polymerase embedded in an ER-derived membranous web. As to quaternary structure, monomer. Homodimer; dimerization is required for RNA-binding. Interacts with the mature core protein. Interacts (via N-terminus) with non-structural protein 4A. Interacts with non-structural protein 4B. Interacts (via region D2) with RNA-directed RNA polymerase. Part of the viral assembly initiation complex composed of NS2, E1, E2, NS3, NS4A, NS5A and the mature core protein. Part of the replication complex composed of NS2, NS3, NS4A, NS4B, NS5A and the RNA-directed RNA polymerase embedded in an ER-derived membranous web. Interacts with host GRB2. Interacts with host BIN1. Interacts with host PIK3R1. Interacts with host SRCAP. Interacts with host FKBP8. Interacts (via C-terminus) with host VAPB (via MSP domain). Interacts with host EIF2AK2/PKR; this interaction leads to disruption of EIF2AK2 dimerization by NS5A and probably allows the virus to evade the innate immune response. Interacts (via N-terminus) with host PACSIN2 (via N-terminus); this interaction attenuates protein kinase C alpha-mediated phosphorylation of PACSIN2 by disrupting the interaction between PACSIN2 and PRKCA. Interacts (via N-terminus) with host SRC kinase (via SH2 domain). Interacts with most Src-family kinases. Interacts with host IFI27 and SKP2; promotes the ubiquitin-mediated proteasomal degradation of NS5A. Interacts with host GPS2. Interacts with host TNFRSF21; this interaction allows the modulation by the virus of JNK, p38 MAPK, STAT3, and Akt signaling pathways in a DR6-dependent manner. Interacts (via N-terminus) with host CIDEB (via N-terminus); this interaction seems to regulate the association of HCV particles with APOE. Interacts with host CHKA/Choline Kinase-alpha; CHKA bridges host PI4KA and NS5A and potentiates NS5A-stimulated PI4KA activity, which then facilitates the targeting of the ternary complex to the ER for viral replication. Interacts with host SPSB2 (via C-terminus); this interaction targets NS5A for ubiquitination and degradation. Interacts with host RAB18; this interaction may promote the association of NS5A and other replicase components with lipid droplets. Interacts (via region D2) with host PPIA/CYPA; the interaction stimulates RNA-binding ability of NS5A and is dependent on the peptidyl-prolyl cis-trans isomerase activity of PPIA/CYPA. Interacts with host TRIM14; this interaction induces the degradation of NS5A. Homooligomer. Interacts with non-structural protein 5A. Interacts with host VAPB. Interacts with host PRK2/PKN2. Interacts with host HNRNPA1 and SEPT6; these interactions facilitate viral replication. Part of the replication complex composed of NS2, NS3, NS4A, NS4B, NS5A and the RNA-directed RNA polymerase. Zn(2+) is required as a cofactor. Mg(2+) serves as cofactor. Specific enzymatic cleavages in vivo yield mature proteins. The structural proteins, core, E1, E2 and p7 are produced by proteolytic processing by host signal peptidases. The core protein precursor is synthesized as a 23 kDa, which is retained in the ER membrane through the hydrophobic signal peptide. Cleavage by the signal peptidase releases the 21 kDa mature core protein. The cleavage of the core protein precursor occurs between aminoacids 176 and 188 but the exact cleavage site is not known. Some degraded forms of the core protein appear as well during the course of infection. The other proteins (p7, NS2, NS3, NS4A, NS4B, NS5A and NS5B) are cleaved by the viral proteases. Autoprocessing between NS2 and NS3 is mediated by the NS2 cysteine protease catalytic domain and regulated by the NS3 N-terminal domain. Post-translationally, phosphorylated by host PKC and PKA. In terms of processing, ubiquitinated; mediated by UBE3A and leading to core protein subsequent proteasomal degradation. Highly N-glycosylated. Post-translationally, palmitoylation is required for NS2/3 autoprocessing and E2 recruitment to membranes. In terms of processing, palmitoylated. This modification may play a role in its polymerization or in protein-protein interactions. Phosphorylated on serines in a basal form termed p56. p58 is a hyperphosphorylated form of p56. p56 and p58 coexist in the cell in roughly equivalent amounts. Hyperphosphorylation is dependent on the presence of NS4A. Host CSNK1A1/CKI-alpha or RPS6KB1 kinases may be responsible for NS5A phosphorylation. Post-translationally, tyrosine phosphorylation is essential for the interaction with host SRC. In terms of processing, the N-terminus is phosphorylated by host PRK2/PKN2.

Its subcellular location is the host endoplasmic reticulum membrane. It localises to the host mitochondrion membrane. The protein resides in the virion. It is found in the host cytoplasm. The protein localises to the host nucleus. Its subcellular location is the host lipid droplet. It localises to the virion membrane. The protein resides in the host mitochondrion. It is found in the host cell membrane. The protein localises to the host perinuclear region. It catalyses the reaction Hydrolysis of four peptide bonds in the viral precursor polyprotein, commonly with Asp or Glu in the P6 position, Cys or Thr in P1 and Ser or Ala in P1'.. The enzyme catalyses a ribonucleoside 5'-triphosphate + H2O = a ribonucleoside 5'-diphosphate + phosphate + H(+). It carries out the reaction ATP + H2O = ADP + phosphate + H(+). The catalysed reaction is RNA(n) + a ribonucleoside 5'-triphosphate = RNA(n+1) + diphosphate. Its activity is regulated as follows. Inhibited by the antiviral drug hexamethylene amiloride. Inhibition by amantadine appears to be genotype-dependent. Also inhibited by long-alkyl-chain iminosugar derivatives. With respect to regulation, activity is up-regulated by PRK2/PKN2-mediated phosphorylation. In terms of biological role, packages viral RNA to form a viral nucleocapsid, and promotes virion budding. Participates in the viral particle production as a result of its interaction with the non-structural protein 5A. Binds RNA and may function as a RNA chaperone to induce the RNA structural rearrangements taking place during virus replication. Modulates viral translation initiation by interacting with viral IRES and 40S ribosomal subunit. Affects various cell signaling pathways, host immunity and lipid metabolism. Prevents the establishment of cellular antiviral state by blocking the interferon-alpha/beta (IFN-alpha/beta) and IFN-gamma signaling pathways and by blocking the formation of phosphorylated STAT1 and promoting ubiquitin-mediated proteasome-dependent degradation of STAT1. Activates STAT3 leading to cellular transformation. Regulates the activity of cellular genes, including c-myc and c-fos. May repress the promoter of p53, and sequester CREB3 and SP110 isoform 3/Sp110b in the cytoplasm. Represses cell cycle negative regulating factor CDKN1A, thereby interrupting an important check point of normal cell cycle regulation. Targets transcription factors involved in the regulation of inflammatory responses and in the immune response: suppresses TNF-induced NF-kappa-B activation, and activates AP-1. Binds to dendritic cells (DCs) via C1QR1, resulting in down-regulation of T-lymphocytes proliferation. Alters lipid metabolism by interacting with hepatocellular proteins involved in lipid accumulation and storage. Induces up-regulation of FAS promoter activity, and thereby contributes to the increased triglyceride accumulation in hepatocytes (steatosis). Its function is as follows. Forms a heterodimer with envelope glycoprotein E2, which mediates virus attachment to the host cell, virion internalization through clathrin-dependent endocytosis and fusion with host membrane. Fusion with the host cell is most likely mediated by both E1 and E2, through conformational rearrangements of the heterodimer required for fusion rather than a classical class II fusion mechanism. E1/E2 heterodimer binds host apolipoproteins such as APOB and ApoE thereby forming a lipo-viro-particle (LVP). APOE associated to the LVP allows the initial virus attachment to cell surface receptors such as the heparan sulfate proteoglycans (HSPGs), syndecan-1 (SDC1), syndecan-1 (SDC2), the low-density lipoprotein receptor (LDLR) and scavenger receptor class B type I (SCARB1). The cholesterol transfer activity of SCARB1 allows E2 exposure and binding of E2 to SCARB1 and the tetraspanin CD81. E1/E2 heterodimer binding on CD81 activates the epithelial growth factor receptor (EGFR) signaling pathway. Diffusion of the complex E1-E2-EGFR-SCARB1-CD81 to the cell lateral membrane allows further interaction with Claudin 1 (CLDN1) and occludin (OCLN) to finally trigger HCV entry. Forms a heterodimer with envelope glycoprotein E1, which mediates virus attachment to the host cell, virion internalization through clathrin-dependent endocytosis and fusion with host membrane. Fusion with the host cell is most likely mediated by both E1 and E2, through conformational rearrangements of the heterodimer required for fusion rather than a classical class II fusion mechanism. The interaction between envelope glycoprotein E2 and host apolipoprotein E/APOE allows the proper assembly, maturation and infectivity of the viral particles. This interaction is probably promoted via the up-regulation of cellular autophagy by the virus. E1/E2 heterodimer binds host apolipoproteins such as APOB and APOE thereby forming a lipo-viro-particle (LVP). APOE associated to the LVP allows the initial virus attachment to cell surface receptors such as the heparan sulfate proteoglycans (HSPGs), syndecan-1 (SDC1), syndecan-1 (SDC2), the low-density lipoprotein receptor (LDLR) and scavenger receptor class B type I (SCARB1). The cholesterol transfer activity of SCARB1 allows E2 exposure and binding of E2 to SCARB1 and the tetraspanin CD81. E1/E2 heterodimer binding on CD81 activates the epithelial growth factor receptor (EGFR) signaling pathway. Diffusion of the complex E1-E2-EGFR-SCARB1-CD81 to the cell lateral membrane allows further interaction with Claudin 1 (CLDN1) and occludin (OCLN) to finally trigger HCV entry. Inhibits host EIF2AK2/PKR activation, preventing the establishment of an antiviral state. Viral ligand for CD209/DC-SIGN and CLEC4M/DC-SIGNR, which are respectively found on dendritic cells (DCs), and on liver sinusoidal endothelial cells and macrophage-like cells of lymph node sinuses. These interactions allow the capture of circulating HCV particles by these cells and subsequent facilitated transmission to permissive cells such as hepatocytes and lymphocyte subpopulations. The interaction between E2 and host amino acid transporter complex formed by SLC3A2 and SLC7A5/LAT1 may facilitate viral entry into host cell. Functionally, ion channel protein that acts as a viroporin and plays an essential role in the assembly, envelopment and secretion of viral particles. Regulates the host cell secretory pathway, which induces the intracellular retention of viral glycoproteins and favors assembly of viral particles. Creates a pore in acidic organelles and releases Ca(2+) and H(+) in the cytoplasm of infected cells, leading to a productive viral infection. High levels of cytoplasmic Ca(2+) may trigger membrane trafficking and transport of viral ER-associated proteins to viroplasms, sites of viral genome replication. This ionic imbalance induces the assembly of the inflammasome complex, which triggers the maturation of pro-IL-1beta into IL-1beta through the action of caspase-1. Targets also host mitochondria and induces mitochondrial depolarization. In addition of its role as a viroporin, acts as a lipid raft adhesion factor. In terms of biological role, cysteine protease required for the proteolytic auto-cleavage between the non-structural proteins NS2 and NS3. The N-terminus of NS3 is required for the function of NS2 protease (active region NS2-3). Promotes the initiation of viral particle assembly by mediating the interaction between structural and non-structural proteins. Its function is as follows. Displays three enzymatic activities: serine protease with a chymotrypsin-like fold, NTPase and RNA helicase. NS3 serine protease, in association with NS4A, is responsible for the cleavages of NS3-NS4A, NS4A-NS4B, NS4B-NS5A and NS5A-NS5B. The NS3/NS4A complex prevents phosphorylation of host IRF3, thus preventing the establishment of dsRNA induced antiviral state. The NS3/NS4A complex induces host amino acid transporter component SLC3A2, thus contributing to HCV propagation. NS3 RNA helicase binds to RNA and unwinds both dsDNA and dsRNA in the 3' to 5' direction, and likely resolves RNA complicated stable secondary structures in the template strand. Binds a single ATP and catalyzes the unzipping of a single base pair of dsRNA. Inhibits host antiviral proteins TBK1 and IRF3 thereby preventing the establishment of an antiviral state. Cleaves host MAVS/CARDIF thereby preventing the establishment of an antiviral state. Cleaves host TICAM1/TRIF, thereby disrupting TLR3 signaling and preventing the establishment of an antiviral state. Induces a specific membrane alteration that serves as a scaffold for the virus replication complex. This membrane alteration gives rise to the so-called ER-derived membranous web that contains the replication complex. NS4B self-interaction contributes to its function in membranous web formation. Promotes host TRIF protein degradation in a CASP8-dependent manner thereby inhibiting host TLR3-mediated interferon signaling. Disrupts the interaction between STING and TBK1 contributing to the inhibition of interferon signaling. Functionally, phosphorylated protein that is indispensable for viral replication and assembly. Both hypo- and hyperphosphorylated states are required for the viral life cycle. The hyperphosphorylated form of NS5A is an inhibitor of viral replication. Involved in RNA-binding and especially in binding to the viral genome. Zinc is essential for RNA-binding. Participates in the viral particle production as a result of its interaction with the mature viral core protein. Its interaction with host VAPB may target the viral replication complex to vesicles. Down-regulates viral IRES translation initiation. Mediates interferon resistance, presumably by interacting with and inhibiting host EIF2AK2/PKR. Prevents BIN1-induced apoptosis. Acts as a transcriptional activator of some host genes important for viral replication when localized in the nucleus. Via the interaction with host PACSIN2, modulates lipid droplet formation in order to promote virion assembly. Modulates TNFRSF21/DR6 signaling pathway for viral propagation. In terms of biological role, RNA-dependent RNA polymerase that performs primer-template recognition and RNA synthesis during viral replication. Initiates RNA transcription/replication at a flavin adenine dinucleotide (FAD), resulting in a 5'- FAD cap on viral RNAs. In this way, recognition of viral 5' RNA by host pattern recognition receptors can be bypassed, thereby evading activation of antiviral pathways. The polypeptide is Genome polyprotein (Homo sapiens (Human)).